A 398-amino-acid polypeptide reads, in one-letter code: Subtilisin-like serine protease EN45_076310 (398 aa).

The first 19 residues, 1–19, serve as a signal peptide directing secretion; the sequence is MGFLKLLSTSLATLAVVNA. The propeptide at 20–115 is removed in mature form; that stretch reads GKLLTANDGD…VEPDMVVNAT (96 aa). Residues 35-113 enclose the Inhibitor I9 domain; sequence SYIVVMNDGV…KYVEPDMVVN (79 aa). N-linked (GlcNAc...) asparagine glycosylation is present at Asn113. Positions 124–134 are igE-binding; that stretch reads PSWGLSRISSK. The Peptidase S8 domain occupies 125-398; sequence SWGLSRISSK…KLLYNGINAQ (274 aa). Asp157 functions as the Charge relay system in the catalytic mechanism. The interval 163-170 is igE-binding; sequence GHADFGGR. The tract at residues 175-195 is disordered; it reads TNTADNDDTDGNGHGTHTAST. His188 acts as the Charge relay system in catalysis. The igE-binding stretch occupies residues 227–245; that stretch reads IAGMDWAVKDSKSRGATGK. N-linked (GlcNAc...) asparagine glycosylation occurs at Asn249. The interval 310 to 318 is igE-binding; that stretch reads SFTNFGSVV. Ser343 (charge relay system) is an active-site residue.

This sequence belongs to the peptidase S8 family.

Its subcellular location is the secreted. Its activity is regulated as follows. Inhibited by phenylmethanesulfonyl fluoride (PMSF) and diethyl pyrocarbonate (DEPC), but not by benzamidine. Its function is as follows. Serine protease that hydrolyzes casein, gelatin and human collagen type IV, but not elastin in vitro. Hydrolyzes OCLN of the human lung epithelial cells at 202-Gln-|-Ser-203 and Gln-211-|-Ile-212. The polypeptide is Subtilisin-like serine protease EN45_076310 (Penicillium chrysogenum (Penicillium notatum)).